The chain runs to 77 residues: Small ribosomal subunit protein bS18 (77 aa).

It belongs to the bacterial ribosomal protein bS18 family. Part of the 30S ribosomal subunit. Forms a tight heterodimer with protein bS6.

In terms of biological role, binds as a heterodimer with protein bS6 to the central domain of the 16S rRNA, where it helps stabilize the platform of the 30S subunit. This Shouchella clausii (strain KSM-K16) (Alkalihalobacillus clausii) protein is Small ribosomal subunit protein bS18.